Here is a 662-residue protein sequence, read N- to C-terminus: DNA ligase (662 aa).

Residues 31 to 35 (DKDYD) and 79 to 80 (SL) each bind NAD(+). Residue lysine 121 is the N6-AMP-lysine intermediate of the active site. NAD(+) contacts are provided by arginine 143, glutamate 177, and lysine 313. The Zn(2+) site is built by cysteine 406, cysteine 409, cysteine 422, and cysteine 428. The region spanning 586–662 (VLESPFMGKT…LSEEEFENMI (77 aa)) is the BRCT domain.

The protein belongs to the NAD-dependent DNA ligase family. LigA subfamily. Mg(2+) serves as cofactor. The cofactor is Mn(2+).

The enzyme catalyses NAD(+) + (deoxyribonucleotide)n-3'-hydroxyl + 5'-phospho-(deoxyribonucleotide)m = (deoxyribonucleotide)n+m + AMP + beta-nicotinamide D-nucleotide.. Functionally, DNA ligase that catalyzes the formation of phosphodiester linkages between 5'-phosphoryl and 3'-hydroxyl groups in double-stranded DNA using NAD as a coenzyme and as the energy source for the reaction. It is essential for DNA replication and repair of damaged DNA. This chain is DNA ligase, found in Clostridium perfringens (strain SM101 / Type A).